The chain runs to 225 residues: UPF0758 protein BCG9842_B0662 (225 aa).

The 123-residue stretch at serine 103–isoleucine 225 folds into the MPN domain. Residues histidine 174, histidine 176, and aspartate 187 each contribute to the Zn(2+) site. A JAMM motif motif is present at residues histidine 174 to aspartate 187.

The protein belongs to the UPF0758 family.

The polypeptide is UPF0758 protein BCG9842_B0662 (Bacillus cereus (strain G9842)).